The chain runs to 270 residues: MSSTKSDFEIIREYIIGDGKDISVGKAPEGNVRLEITHSVLTGESLGTNNFKNFSLDLKIKDFKEKLYRFVGTEPKYMELILRDENKVNDICKIDDDDDKTLGSYEPKDGMNVHIIDKDPNNFVSELQDISKAPKPVISEEDYNKREGTYKKWKEENQLKKENDTTATTVTATTTTTNNATDTEIEIKVGDRCKVISDDPTNYDERLGKVQYVGTVEFSSGVWIGVELDLPLGKNDGSVKGKQYFQCSPKYGCFAKPKNVLVGDYPEEEI.

In terms of domain architecture, CAP-Gly spans 214 to 256 (GTVEFSSGVWIGVELDLPLGKNDGSVKGKQYFQCSPKYGCFAK).

This sequence belongs to the TBCB family. As to quaternary structure, supercomplex made of cofactors A to E. Cofactors A and D function by capturing and stabilizing tubulin in a quasi-native conformation. Cofactor E binds to the cofactor D-tubulin complex; interaction with cofactor C then causes the release of tubulin polypeptides that are committed to the native state.

It localises to the cytoplasm. The protein localises to the cytoskeleton. Binds to alpha-tubulin folding intermediates after their interaction with cytosolic chaperonin in the pathway leading from newly synthesized tubulin to properly folded heterodimer. The chain is Tubulin-specific chaperone B (tbcb) from Dictyostelium discoideum (Social amoeba).